The primary structure comprises 185 residues: Sulfopyruvate decarboxylase subunit beta (185 aa).

Belongs to the TPP enzyme family. In terms of assembly, heterododecamer composed of 6 subunits alpha and 6 subunits beta. It depends on thiamine diphosphate as a cofactor.

It catalyses the reaction 3-sulfopyruvate + H(+) = sulfoacetaldehyde + CO2. Its pathway is cofactor biosynthesis; coenzyme M biosynthesis; sulfoacetaldehyde from phosphoenolpyruvate and sulfite: step 4/4. In terms of biological role, involved in the biosynthesis of the coenzyme M (2-mercaptoethanesulfonic acid). Catalyzes the decarboxylation of sulfopyruvate to sulfoacetaldehyde. The sequence is that of Sulfopyruvate decarboxylase subunit beta from Methanothermobacter thermautotrophicus (strain ATCC 29096 / DSM 1053 / JCM 10044 / NBRC 100330 / Delta H) (Methanobacterium thermoautotrophicum).